Reading from the N-terminus, the 109-residue chain is Putative membrane protein insertion efficiency factor (109 aa).

It belongs to the UPF0161 family.

It localises to the cell inner membrane. Functionally, could be involved in insertion of integral membrane proteins into the membrane. This Rhodopseudomonas palustris (strain BisA53) protein is Putative membrane protein insertion efficiency factor.